Consider the following 143-residue polypeptide: Large ribosomal subunit protein uL11 (143 aa).

Belongs to the universal ribosomal protein uL11 family. Part of the ribosomal stalk of the 50S ribosomal subunit. Interacts with L10 and the large rRNA to form the base of the stalk. L10 forms an elongated spine to which L12 dimers bind in a sequential fashion forming a multimeric L10(L12)X complex. In terms of processing, one or more lysine residues are methylated.

Its function is as follows. Forms part of the ribosomal stalk which helps the ribosome interact with GTP-bound translation factors. The sequence is that of Large ribosomal subunit protein uL11 from Chromohalobacter salexigens (strain ATCC BAA-138 / DSM 3043 / CIP 106854 / NCIMB 13768 / 1H11).